A 113-amino-acid polypeptide reads, in one-letter code: Iron-sulfur cluster insertion protein ErpA (113 aa).

The iron-sulfur cluster site is built by C41, C105, and C107.

It belongs to the HesB/IscA family. In terms of assembly, homodimer. Requires iron-sulfur cluster as cofactor.

Required for insertion of 4Fe-4S clusters for at least IspG. This is Iron-sulfur cluster insertion protein ErpA from Vibrio vulnificus (strain CMCP6).